The primary structure comprises 477 residues: MIEVLLVTICLAAFPYQGSSIILESGNVNDYEVIYPRKVTALPKGAVQPKYEDAMQYELKVNGEPVVLHLEKNKGLFSKDYSETHYSPDGRKITTNPPVEDHCYYHGRIENDADSTASISACNGLKGHFKLQGETYLIEPLKLSDSEAHAVFKFENVEKEDEAPKMCGVTQNWESYEPIKKASQSNLTPEHQRYIELFLVVDHGMFMKYNGNSDKIRRRIHQMVNIMKEAYRYLYIDIALTGVEIWSNKDMINVQPAAPQTLDSFGEWRKTDLLNRKSHDNAQLLTSTDFKDQTIGLAYWGSMCDPKRSTAVIEDHSETDLLVAVTMAHELGHNLGIRHDTGSCSCGGYSCIMAPVISHDIAKYFSDCSYIQCWDFIMKDNPQCILNKQLRTDTVSTPVSGKNFGAGEECDCGTPGNPCCDAVTCKLRPGAQCAEGLCCDQCRFMKEGTVCRRARGDDMDDYCNGISAGCPRNPFHA.

The first 20 residues, 1–20 (MIEVLLVTICLAAFPYQGSS), serve as a signal peptide directing secretion. A propeptide spanning residues 21–187 (IILESGNVND…PIKKASQSNL (167 aa)) is cleaved from the precursor. The Peptidase M12B domain occupies 193 to 389 (RYIELFLVVD…DNPQCILNKQ (197 aa)). 2 residues coordinate Ca(2+): E196 and D280. Intrachain disulfides connect C304/C384, C344/C368, and C346/C351. H329 is a Zn(2+) binding site. Residue E330 is part of the active site. Zn(2+)-binding residues include H333 and H339. Ca(2+) contacts are provided by C384 and N387. Residues 390–404 (LRTDTVSTPVSGKNF) constitute a propeptide that is removed on maturation. In terms of domain architecture, Disintegrin spans 396–477 (STPVSGKNFG…AGCPRNPFHA (82 aa)). Intrachain disulfides connect C410/C425, C412/C420, C419/C442, C433/C439, C438/C463, and C451/C470. Positions 455-457 (RGD) match the Cell attachment site motif.

This sequence belongs to the venom metalloproteinase (M12B) family. P-II subfamily. P-IIa sub-subfamily. In terms of assembly, monomer. Zn(2+) serves as cofactor. As to expression, expressed by the venom gland.

The protein resides in the secreted. Its activity is regulated as follows. Inhibited by 1,10-phenanthroline and EDTA. Impairs hemostasis in the envenomed animal. Does not exhibit detectable plasminogen activating activity. Has hemagglutinating activity on red blood cells. Cleaves insulin B chain at '38-Ala-|-Leu-39' and '40-Tyr-|-Leu-41' bonds. In terms of biological role, this recombinant protein shows high inhibitory activity on collagen-induced platelet aggregation. This chain is Zinc metalloproteinase/disintegrin, found in Bothrops jararaca (Jararaca).